We begin with the raw amino-acid sequence, 99 residues long: Bublin coiled-coil protein (99 aa).

The stretch at 34–71 (LDQINSCLDDIEERNDALNGKLQELLESNRAARRDFRQ) forms a coiled coil. A compositionally biased stretch (basic and acidic residues) spans 66-78 (RRDFRQQITDHAD). The disordered stretch occupies residues 66–99 (RRDFRQQITDHADLPPPANDDDEDEQSRDAQKKD).

Belongs to the UPF0184 (EST00098) family.

The protein localises to the cell junction. It is found in the cytoplasm. Its subcellular location is the cytoskeleton. Its function is as follows. Essential for intermediate filament organization in intestinal cells, interacts with intermediate filament and regulates intestinal lumen morphology. In Danio rerio (Zebrafish), this protein is Bublin coiled-coil protein (bbln).